The following is a 364-amino-acid chain: Geranylfarnesyl diphosphate synthase, chloroplastic (364 aa).

The transit peptide at 1-51 (MSHCTIFLYKYFPGKPRYQHCSFLHPLNHKLKSLFLPITGSRFLSNSTFSV) directs the protein to the chloroplast. Lysine 72, lysine 111, and histidine 143 together coordinate isopentenyl diphosphate. The Mg(2+) site is built by aspartate 150 and aspartate 156. Dimethylallyl diphosphate is bound at residue arginine 161. Arginine 162 contacts isopentenyl diphosphate. Lysine 249, threonine 250, glutamine 287, aspartate 294, lysine 304, and lysine 314 together coordinate dimethylallyl diphosphate.

This sequence belongs to the FPP/GGPP synthase family. In terms of assembly, monomer. The cofactor is Mg(2+). In terms of tissue distribution, strongly expressed in glandular trichomes, and, at low levels, in leaves, stems and flowers.

Its subcellular location is the plastid. The protein resides in the chloroplast. It carries out the reaction isopentenyl diphosphate + (2E,6E,10E)-geranylgeranyl diphosphate = (2E,6E,10E,14E)-geranylfarnesyl diphosphate + diphosphate. It catalyses the reaction 2 isopentenyl diphosphate + (2E,6E)-farnesyl diphosphate = (2E,6E,10E,14E)-geranylfarnesyl diphosphate + 2 diphosphate. The enzyme catalyses 3 isopentenyl diphosphate + (2E)-geranyl diphosphate = (2E,6E,10E,14E)-geranylfarnesyl diphosphate + 3 diphosphate. The catalysed reaction is 4 isopentenyl diphosphate + dimethylallyl diphosphate = (2E,6E,10E,14E)-geranylfarnesyl diphosphate + 4 diphosphate. It functions in the pathway secondary metabolite biosynthesis; terpenoid biosynthesis. Its pathway is isoprenoid biosynthesis. Involved in the biosynthesis of leucosceptrane sesterterpenoids natural products, which are playing defensive roles toward herbivorus insects (e.g. Spodoptera exigua). Catalyzes the condensation of isopentenyl pyrophosphate (IDP) with the allylic pyrophosphates to yield geranylfarnesyl diphosphate (GFDP), the C(25) prenyl diphosphate precursor to all sesterterpenoids. Geranylgeranyl diphosphate (GGPP) is the preferred substrate, however dimethylallyl diphosphate (DMADP), farnesyl diphosphate (FDP) and geranyl diphosphate (GDP) can also be used as allylic substrate. The sequence is that of Geranylfarnesyl diphosphate synthase, chloroplastic from Leucosceptrum canum (Hairy white-wand).